The sequence spans 514 residues: 2-isopropylmalate synthase (514 aa).

The 264-residue stretch at Leu-5–Val-268 folds into the Pyruvate carboxyltransferase domain. Asp-14, His-202, His-204, and Asn-239 together coordinate Mn(2+). The tract at residues Lys-395 to Ala-514 is regulatory domain.

This sequence belongs to the alpha-IPM synthase/homocitrate synthase family. LeuA type 1 subfamily. In terms of assembly, homodimer. It depends on Mn(2+) as a cofactor.

It localises to the cytoplasm. It carries out the reaction 3-methyl-2-oxobutanoate + acetyl-CoA + H2O = (2S)-2-isopropylmalate + CoA + H(+). It participates in amino-acid biosynthesis; L-leucine biosynthesis; L-leucine from 3-methyl-2-oxobutanoate: step 1/4. In terms of biological role, catalyzes the condensation of the acetyl group of acetyl-CoA with 3-methyl-2-oxobutanoate (2-ketoisovalerate) to form 3-carboxy-3-hydroxy-4-methylpentanoate (2-isopropylmalate). In Burkholderia cenocepacia (strain HI2424), this protein is 2-isopropylmalate synthase.